Here is a 302-residue protein sequence, read N- to C-terminus: Methionyl-tRNA formyltransferase (302 aa).

Position 108–111 (108–111 (SLLP)) interacts with (6S)-5,6,7,8-tetrahydrofolate. Residues 276–288 (REGKRPMEPEEFL) are compositionally biased toward basic and acidic residues. Positions 276 to 302 (REGKRPMEPEEFLRGFPLPEGSRAHTA) are disordered.

This sequence belongs to the Fmt family.

The enzyme catalyses L-methionyl-tRNA(fMet) + (6R)-10-formyltetrahydrofolate = N-formyl-L-methionyl-tRNA(fMet) + (6S)-5,6,7,8-tetrahydrofolate + H(+). Attaches a formyl group to the free amino group of methionyl-tRNA(fMet). The formyl group appears to play a dual role in the initiator identity of N-formylmethionyl-tRNA by promoting its recognition by IF2 and preventing the misappropriation of this tRNA by the elongation apparatus. The chain is Methionyl-tRNA formyltransferase from Cereibacter sphaeroides (strain KD131 / KCTC 12085) (Rhodobacter sphaeroides).